The sequence spans 710 residues: Chaperonin-containing T-complex member BBS12 (710 aa).

The protein belongs to the TCP-1 chaperonin family. BBS12 subfamily. Component of the chaperonin-containing T-complex (TRiC), a heterooligomeric complex of about 850 to 900 kDa that forms two stacked rings, 12 to 16 nm in diameter. Interacts with MKKS.

It localises to the cell projection. The protein resides in the cilium. Functionally, component of the chaperonin-containing T-complex (TRiC), a molecular chaperone complex that assists the folding of proteins upon ATP hydrolysis. As part of the TRiC complex may play a role in the assembly of BBSome, a complex involved in ciliogenesis regulating transports vesicles to the cilia. Involved in adipogenic differentiation. In Pongo abelii (Sumatran orangutan), this protein is Chaperonin-containing T-complex member BBS12 (BBS12).